The primary structure comprises 90 residues: Small ribosomal subunit protein bS18 (90 aa).

Belongs to the bacterial ribosomal protein bS18 family. As to quaternary structure, part of the 30S ribosomal subunit. Forms a tight heterodimer with protein bS6.

Functionally, binds as a heterodimer with protein bS6 to the central domain of the 16S rRNA, where it helps stabilize the platform of the 30S subunit. This Bordetella avium (strain 197N) protein is Small ribosomal subunit protein bS18.